The chain runs to 1051 residues: Ubiquitin-activating enzyme E1 1 (1051 aa).

A run of 2 repeats spans residues 56 to 194 (GRET…GSVF) and 453 to 605 (GSKL…QMVI). The segment at 56 to 605 (GRETMKRLFG…GAKCNTQMVI (550 aa)) is 2 approximate repeats. ATP contacts are provided by residues alanine 472, aspartate 498, arginine 509, lysine 522, and 570–571 (DN). Residue cysteine 626 is the Glycyl thioester intermediate of the active site.

It belongs to the ubiquitin-activating E1 family. Monomer. The N-terminus is blocked.

The catalysed reaction is ATP + ubiquitin + [E1 ubiquitin-activating enzyme]-L-cysteine = AMP + diphosphate + S-ubiquitinyl-[E1 ubiquitin-activating enzyme]-L-cysteine.. Its pathway is protein modification; protein ubiquitination. In terms of biological role, activates ubiquitin by first adenylating its C-terminal glycine residue with ATP, and thereafter linking this residue to the side chain of a cysteine residue in E1, yielding a ubiquitin-E1 thioester and free AMP. In Triticum aestivum (Wheat), this protein is Ubiquitin-activating enzyme E1 1.